Here is a 235-residue protein sequence, read N- to C-terminus: Bypass of stop codon protein 2 (235 aa).

The chain crosses the membrane as a helical span at residues Phe68–Ile88. A Phosphoserine modification is found at Ser177.

It is found in the lipid droplet. The protein localises to the membrane. This chain is Bypass of stop codon protein 2 (BSC2), found in Saccharomyces cerevisiae (strain ATCC 204508 / S288c) (Baker's yeast).